We begin with the raw amino-acid sequence, 526 residues long: Putative UDP-glucuronosyltransferase ugt-48 (526 aa).

Positions 1 to 17 (MLLRILTFLAVCQVTTS) are cleaved as a signal peptide. N-linked (GlcNAc...) asparagine glycosylation is found at Asn58 and Asn305. Residues 489-509 (FYNLDIIITAASIPVLIFIVL) form a helical membrane-spanning segment. Asn513 carries N-linked (GlcNAc...) asparagine glycosylation.

It belongs to the UDP-glycosyltransferase family. Interacts with cmd-1 in the presence of Ca(2+).

It localises to the membrane. The enzyme catalyses glucuronate acceptor + UDP-alpha-D-glucuronate = acceptor beta-D-glucuronoside + UDP + H(+). This is Putative UDP-glucuronosyltransferase ugt-48 (ugt-48) from Caenorhabditis elegans.